A 249-amino-acid chain; its full sequence is DNA repair protein RecO (249 aa).

It belongs to the RecO family.

In terms of biological role, involved in DNA repair and RecF pathway recombination. This is DNA repair protein RecO from Rhodopseudomonas palustris (strain HaA2).